An 806-amino-acid polypeptide reads, in one-letter code: Phenylalanine--tRNA ligase beta subunit (806 aa).

A tRNA-binding domain is found at 40-153; sequence FNSPDYLQLA…ADAIIIDHVS (114 aa). Positions 413–487 constitute a B5 domain; sequence PFSKKLTVNF…KLIDINKLKP (75 aa). Positions 465, 471, 474, and 475 each coordinate Mg(2+).

It belongs to the phenylalanyl-tRNA synthetase beta subunit family. Type 1 subfamily. As to quaternary structure, tetramer of two alpha and two beta subunits. Requires Mg(2+) as cofactor.

The protein resides in the cytoplasm. The enzyme catalyses tRNA(Phe) + L-phenylalanine + ATP = L-phenylalanyl-tRNA(Phe) + AMP + diphosphate + H(+). The sequence is that of Phenylalanine--tRNA ligase beta subunit (pheT) from Mycoplasma genitalium (strain ATCC 33530 / DSM 19775 / NCTC 10195 / G37) (Mycoplasmoides genitalium).